The following is a 211-amino-acid chain: uncharacterized protein (211 aa).

Residues 1–33 (MQNGTEDKSNIPARSNDDVLPPLAVRLTMKVMR) are Cytoplasmic-facing. The chain crosses the membrane as a helical span at residues 34–54 (LIFIGKMFAYSFVPFPPFKLL). Residues 55 to 58 (TFDN) are Lumenal-facing. The chain crosses the membrane as a helical span at residues 59-79 (TVGWFVAYSAIVSIWGFAVWM). At 80–116 (ERGYRHKINLLPPRCTKIRCSRCNTRIRSPNWFKYKN) the chain is on the cytoplasmic side. A helical transmembrane segment spans residues 117–137 (WLYFFLLYVSLTTSNLIIQLA). Residues 138-162 (SFMTEMSRRGISVPGTKDPGKRDYL) are Lumenal-facing. Residues 163–183 (GLIIPMRFIGAFIHYMTANLF) form a helical membrane-spanning segment. The Cytoplasmic segment spans residues 184-211 (KEYYLHNGPLEKNDRPSTDEKTSENETL).

It is found in the endoplasmic reticulum membrane. This is an uncharacterized protein from Saccharomyces cerevisiae (strain ATCC 204508 / S288c) (Baker's yeast).